A 719-amino-acid polypeptide reads, in one-letter code: Lanosterol synthase (719 aa).

The stretch at 118–160 (RIEVIRYLVNHANPEDGGWGIHIEGKSTVFGTALNYVVLRILG) is one PFTB 1 repeat. Asp-451 acts as the Proton donor in catalysis. PFTB repeat units lie at residues 478–523 (LKDS…MIEH), 555–595 (VKNA…SCVK), and 604–645 (SRRA…VVQT).

Belongs to the terpene cyclase/mutase family.

It catalyses the reaction (S)-2,3-epoxysqualene = lanosterol. Its pathway is terpene metabolism; lanosterol biosynthesis; lanosterol from farnesyl diphosphate: step 3/3. Its function is as follows. Catalyzes the cyclization of (S)-2,3 oxidosqualene to lanosterol, a reaction that forms the sterol nucleus. In Pneumocystis carinii, this protein is Lanosterol synthase (ERG7).